The following is a 64-amino-acid chain: Temporin-ALe (64 aa).

The first 22 residues, 1-22 (MFTLKKSLLLLFFLGTINLSLC), serve as a signal peptide directing secretion. The propeptide occupies 23-47 (EQERNAEEERRDEPDERNAEVEKRF). The residue at position 62 (leucine 62) is a Leucine amide.

As to expression, expressed by the skin glands.

The protein localises to the secreted. Its function is as follows. Antimicrobial peptide with activity against Gram-positive and Gram-negative bacteria and against fungi. Has been tested against S.aureus (MIC=1.25 ug/mL), B.pumilus (MIC=5.0 ug/mL), B.cereus (MIC=15.0 ug/mL), E.coli (MIC=1.25 ug/mL), B.dysenteriae (MIC=5.0 ug/mL), A.cacoaceticus (MIC=15.0 ug/mL), P.aeruginosa (MIC=5.0 ug/mL) and C.albicans (MIC=1.25 ug/mL). Also shows a weak hemolytic activity. The protein is Temporin-ALe of Amolops loloensis (Lolokou Sucker Frog).